The following is a 359-amino-acid chain: Phospho-N-acetylmuramoyl-pentapeptide-transferase (359 aa).

The next 10 membrane-spanning stretches (helical) occupy residues 26-46 (TIYA…WLIR), 75-95 (GGVL…NLTI), 97-117 (YVWL…ADDY), 134-154 (LACE…KPGF), 166-186 (VLPD…VGAA), 197-217 (GLAI…AYFA), 233-253 (GVGE…GFLW), 261-281 (VFMG…LAIV), 286-306 (ILLA…IFQV), and 336-356 (KVIV…ISTL).

This sequence belongs to the glycosyltransferase 4 family. MraY subfamily. Requires Mg(2+) as cofactor.

The protein resides in the cell inner membrane. The enzyme catalyses UDP-N-acetyl-alpha-D-muramoyl-L-alanyl-gamma-D-glutamyl-meso-2,6-diaminopimeloyl-D-alanyl-D-alanine + di-trans,octa-cis-undecaprenyl phosphate = di-trans,octa-cis-undecaprenyl diphospho-N-acetyl-alpha-D-muramoyl-L-alanyl-D-glutamyl-meso-2,6-diaminopimeloyl-D-alanyl-D-alanine + UMP. It functions in the pathway cell wall biogenesis; peptidoglycan biosynthesis. Functionally, catalyzes the initial step of the lipid cycle reactions in the biosynthesis of the cell wall peptidoglycan: transfers peptidoglycan precursor phospho-MurNAc-pentapeptide from UDP-MurNAc-pentapeptide onto the lipid carrier undecaprenyl phosphate, yielding undecaprenyl-pyrophosphoryl-MurNAc-pentapeptide, known as lipid I. This is Phospho-N-acetylmuramoyl-pentapeptide-transferase from Syntrophus aciditrophicus (strain SB).